The following is a 183-amino-acid chain: Small ribosomal subunit protein bS20c (183 aa).

The N-terminal 68 residues, 1-68 (MAAISMACVS…FQRRGFSVVC (68 aa)), are a transit peptide targeting the chloroplast. A disordered region spans residues 79 to 99 (AAKRTRQAETRRLRNKARKSE).

In terms of assembly, component of the chloroplast small ribosomal subunit (SSU). Mature 70S chloroplast ribosomes of higher plants consist of a small (30S) and a large (50S) subunit. The 30S small subunit contains 1 molecule of ribosomal RNA (16S rRNA) and 24 different proteins. The 50S large subunit contains 3 rRNA molecules (23S, 5S and 4.5S rRNA) and 33 different proteins.

Its subcellular location is the plastid. It is found in the chloroplast. Functionally, component of the chloroplast ribosome (chloro-ribosome), a dedicated translation machinery responsible for the synthesis of chloroplast genome-encoded proteins, including proteins of the transcription and translation machinery and components of the photosynthetic apparatus. This chain is Small ribosomal subunit protein bS20c (RPS20), found in Spinacia oleracea (Spinach).